Consider the following 614-residue polypeptide: 2-succinyl-5-enolpyruvyl-6-hydroxy-3-cyclohexene-1-carboxylate synthase (614 aa).

The protein belongs to the TPP enzyme family. MenD subfamily. Homodimer. The cofactor is Mg(2+). Requires Mn(2+) as cofactor. It depends on thiamine diphosphate as a cofactor.

It catalyses the reaction isochorismate + 2-oxoglutarate + H(+) = 5-enolpyruvoyl-6-hydroxy-2-succinyl-cyclohex-3-ene-1-carboxylate + CO2. The protein operates within quinol/quinone metabolism; 1,4-dihydroxy-2-naphthoate biosynthesis; 1,4-dihydroxy-2-naphthoate from chorismate: step 2/7. It participates in quinol/quinone metabolism; menaquinone biosynthesis. In terms of biological role, catalyzes the thiamine diphosphate-dependent decarboxylation of 2-oxoglutarate and the subsequent addition of the resulting succinic semialdehyde-thiamine pyrophosphate anion to isochorismate to yield 2-succinyl-5-enolpyruvyl-6-hydroxy-3-cyclohexene-1-carboxylate (SEPHCHC). In Sorangium cellulosum (strain So ce56) (Polyangium cellulosum (strain So ce56)), this protein is 2-succinyl-5-enolpyruvyl-6-hydroxy-3-cyclohexene-1-carboxylate synthase.